A 347-amino-acid polypeptide reads, in one-letter code: Cannabinoid receptor 2 (347 aa).

At 1 to 33 (MEGCRETEVTNGSNGGLEFNPMKEYMILSSGQQ) the chain is on the extracellular side. Asn-11 carries N-linked (GlcNAc...) asparagine glycosylation. Residues 34–59 (IAVAVLCTLMGLLSALENMAVLYIIL) form a helical membrane-spanning segment. Topologically, residues 60–71 (SSRRLRRKPSYL) are cytoplasmic. A helical transmembrane segment spans residues 72–92 (FISSLAGADFLASVIFACNFV). The Extracellular segment spans residues 93-104 (IFHVFHGVDSNA). The chain crosses the membrane as a helical span at residues 105–129 (IFLLKIGSVTMTFTASVGSLLLTAV). At 130-149 (DRYLCLCYPPTYKALVTRGR) the chain is on the cytoplasmic side. A helical transmembrane segment spans residues 150–172 (ALVALCVMWVLSALISYLPLMGW). Residues 173-188 (TCCPSPCSELFPLIPN) are Extracellular-facing. The chain crosses the membrane as a helical span at residues 189–214 (DYLLGWLLFIAILFSGIIYTYGYVLW). The Cytoplasmic segment spans residues 215–246 (KAHRHVATLAEHQDRQVPGIARMRLDVRLAKT). Residues 247–267 (LGLVLAVLLICWFPALALMGH) traverse the membrane as a helical segment. Over 268 to 279 (SLVTTLSDQVKE) the chain is Extracellular. The helical transmembrane segment at 280–301 (AFAFCSMLCLVNSMVNPIIYAL) threads the bilayer. Residues 302–347 (RSGEIRSAAQHCLIGWKKYLQGLGPEGKEEGPRSSVTETEADVKTT) lie on the Cytoplasmic side of the membrane. Positions 326–347 (PEGKEEGPRSSVTETEADVKTT) are disordered. Ser-335 and Ser-336 each carry phosphoserine. The residue at position 338 (Thr-338) is a Phosphothreonine.

This sequence belongs to the G-protein coupled receptor 1 family. Expressed by cells of hematopoietic origin. Expressed in skin in suprabasal layers and hair follicles, in brain by neurons and glial cells and by osteoblasts, osteocytes, osteoclasts (at protein level).

The protein localises to the cell membrane. The protein resides in the cell projection. It is found in the dendrite. It localises to the perikaryon. Its function is as follows. Heterotrimeric G protein-coupled receptor for endocannabinoid 2-arachidonoylglycerol mediating inhibition of adenylate cyclase. May function in inflammatory response, nociceptive transmission and bone homeostasis. The sequence is that of Cannabinoid receptor 2 (Cnr2) from Mus musculus (Mouse).